We begin with the raw amino-acid sequence, 85 residues long: U4-theraphotoxin-Hhn1ab (85 aa).

The signal sequence occupies residues 1-22; it reads MKVTLIAILTCAAVLVLHTTAA. Positions 23-48 are excised as a propeptide; sequence EELEAESQLMEVGMPDTELAAVDEER. Intrachain disulfides connect cysteine 56-cysteine 77 and cysteine 71-cysteine 82.

The protein belongs to the neurotoxin 12 (Hwtx-2) family. 02 (Hwtx-2) subfamily. In terms of tissue distribution, expressed by the venom gland.

It localises to the secreted. Functionally, postsynaptic neurotoxin. This chain is U4-theraphotoxin-Hhn1ab, found in Cyriopagopus hainanus (Chinese bird spider).